We begin with the raw amino-acid sequence, 285 residues long: Protein phosphatase 1 regulatory subunit 3B (285 aa).

The PP1-binding motif signature appears at 62–65 (RVSF). The 109-residue stretch at 125–233 (RNRLQADHVC…SNRGKNYRII (109 aa)) folds into the CBM21 domain. Phosphoserine is present on Ser-261.

Interacts with glycogen, PPP1CC catalytic subunit of PP1 and PYGL. Associates with glycogen particles. Forms complexes with debranching enzyme, glycogen phosphorylase, glycogen synthase and phosphorylase kinase which is necessary for its regulation of PP1 activity. Highly expressed in the liver and, at lower levels, in skeletal muscle, including in vastus lateralis, gastrocnemius and soleus (at protein level). Highest mRNA levels are observed in skeletal muscle, and only moderate levels in liver and heart. Weak expression in placenta and lung.

Functionally, acts as a glycogen-targeting subunit for phosphatase PP1. Facilitates interaction of the PP1 with enzymes of the glycogen metabolism and regulates its activity. Suppresses the rate at which PP1 dephosphorylates (inactivates) glycogen phosphorylase and enhances the rate at which it activates glycogen synthase and therefore limits glycogen breakdown. Its activity is inhibited by PYGL, resulting in inhibition of the glycogen synthase and glycogen phosphorylase phosphatase activities of PP1. Dramatically increases basal and insulin-stimulated glycogen synthesis upon overexpression in hepatocytes. The protein is Protein phosphatase 1 regulatory subunit 3B (PPP1R3B) of Homo sapiens (Human).